We begin with the raw amino-acid sequence, 270 residues long: Aliphatic sulfonates import ATP-binding protein SsuB (270 aa).

An ABC transporter domain is found at 17 to 238 (LAANDLRRTF…VRGSHRLAAL (222 aa)). An ATP-binding site is contributed by 49–56 (GRSGCGKS). A disordered region spans residues 250–270 (PGTPPEPEPVAPLPTHLRWAH). Residues 251–261 (GTPPEPEPVAP) show a composition bias toward pro residues.

The protein belongs to the ABC transporter superfamily. Aliphatic sulfonates importer (TC 3.A.1.17.2) family. In terms of assembly, the complex is composed of two ATP-binding proteins (SsuB), two transmembrane proteins (SsuC) and a solute-binding protein (SsuA).

The protein resides in the cell inner membrane. The enzyme catalyses ATP + H2O + aliphatic sulfonate-[sulfonate-binding protein]Side 1 = ADP + phosphate + aliphatic sulfonateSide 2 + [sulfonate-binding protein]Side 1.. Part of the ABC transporter complex SsuABC involved in aliphatic sulfonates import. Responsible for energy coupling to the transport system. The protein is Aliphatic sulfonates import ATP-binding protein SsuB of Pseudomonas entomophila (strain L48).